A 424-amino-acid polypeptide reads, in one-letter code: Histidine--tRNA ligase (424 aa).

This sequence belongs to the class-II aminoacyl-tRNA synthetase family. Homodimer.

It is found in the cytoplasm. The enzyme catalyses tRNA(His) + L-histidine + ATP = L-histidyl-tRNA(His) + AMP + diphosphate + H(+). The polypeptide is Histidine--tRNA ligase (Bacillus velezensis (strain DSM 23117 / BGSC 10A6 / LMG 26770 / FZB42) (Bacillus amyloliquefaciens subsp. plantarum)).